The chain runs to 270 residues: Elongation factor Ts (270 aa).

Residues 76–79 (TDFV) are involved in Mg(2+) ion dislocation from EF-Tu.

The protein belongs to the EF-Ts family.

The protein localises to the cytoplasm. Its function is as follows. Associates with the EF-Tu.GDP complex and induces the exchange of GDP to GTP. It remains bound to the aminoacyl-tRNA.EF-Tu.GTP complex up to the GTP hydrolysis stage on the ribosome. The sequence is that of Elongation factor Ts from Corynebacterium aurimucosum (strain ATCC 700975 / DSM 44827 / CIP 107346 / CN-1) (Corynebacterium nigricans).